The sequence spans 140 residues: Protein ripply1 (140 aa).

A WRPW motif; required for gro2-binding motif is present at residues 28–31 (WRPW). Residues 71-106 (HPVRLYWPRSKSFDYLFSDGEALLRNFPVQATINFY) form a ripply homology domain region. Residues 107 to 126 (DESDSEDEEESCDEDDESDV) form a disordered region.

It belongs to the ripply family. In terms of assembly, interacts with gro2 via the WRPW motif. In terms of tissue distribution, expressed in the embryonic anterior presomitic mesoderm and in newly formed somites.

The protein resides in the nucleus. In terms of biological role, plays a role in somitogenesis. Essential for transcriptional repression of the segmental patterning genes, thus terminating the segmentation program in the presomitic mesoderm, and also required for the maintenance of rostrocaudal polarity in somites. This is Protein ripply1 from Danio rerio (Zebrafish).